The following is a 243-amino-acid chain: Adenylate dimethylallyltransferase (243 aa).

It belongs to the isopentenyl transferase family.

It catalyses the reaction dimethylallyl diphosphate + AMP = N(6)-(dimethylallyl)adenosine 5'-phosphate + diphosphate. Functionally, transfers dimethylallyl groups to AMP as part of the biosynthesis of cytokinin phytohormones. The polypeptide is Adenylate dimethylallyltransferase (tzs) (Rhizobium rhizogenes (Agrobacterium rhizogenes)).